Reading from the N-terminus, the 141-residue chain is Large ribosomal subunit protein uL16 (141 aa).

The protein belongs to the universal ribosomal protein uL16 family. As to quaternary structure, part of the 50S ribosomal subunit.

Functionally, binds 23S rRNA and is also seen to make contacts with the A and possibly P site tRNAs. In Deinococcus geothermalis (strain DSM 11300 / CIP 105573 / AG-3a), this protein is Large ribosomal subunit protein uL16.